The primary structure comprises 250 residues: MSLQIQMIGTGSAFAKKFYNNNALVKCNGFQLLIDCGVTAPRALHELGVPITGIDGILITHIHADHVGGIEEFAFRLKYKYGMTIKLFVPAALVNPLWDHSLRGGLENKAEGLEQLADYFDVVALEEAVVHEIHPGLTVELVRSQHIAGKASYSLLLNNLLFYSSDARFNYAQLVELSTSGRCKYILHDCQLAEPAAVHATLNELLTLPEAVQEMIMLMHYDDEMEQFIGKSGKMSFMQQHKTYSFTEAT.

Residues 19–220 are beta-lactamase-like; that stretch reads YNNNALVKCN…AVQEMIMLMH (202 aa). The Zn(2+) site is built by His61, His63, Asp65, His66, His146, Asp166, and His220.

Belongs to the anti-Pycsar protein Apyc1 family. In terms of assembly, homodimer. Zn(2+) is required as a cofactor.

It carries out the reaction 3',5'-cyclic CMP + H2O = CMP + H(+). The enzyme catalyses 3',5'-cyclic UMP + H2O = UMP + H(+). Counteracts the endogenous Pycsar antiviral defense system. Phosphodiesterase that enables metal-dependent hydrolysis of host cyclic nucleotide Pycsar defense signals such as cCMP and cUMP. The sequence is that of Anti-Pycsar protein Apyc1 from Paenibacillus xerothermodurans.